An 842-amino-acid polypeptide reads, in one-letter code: Elongation factor 2 (842 aa).

The tr-type G domain occupies 17–253 (SNVRNMSVIA…LWGENYFNPK (237 aa)). GTP contacts are provided by residues 26 to 33 (AHVDHGKS), 104 to 108 (DSPGH), and 158 to 161 (NKVD). Serine 568 carries the post-translational modification Phosphoserine. Phosphothreonine is present on threonine 574. Residue histidine 699 is modified to Diphthamide.

The protein belongs to the TRAFAC class translation factor GTPase superfamily. Classic translation factor GTPase family. EF-G/EF-2 subfamily.

Its subcellular location is the cytoplasm. In terms of biological role, catalyzes the GTP-dependent ribosomal translocation step during translation elongation. During this step, the ribosome changes from the pre-translocational (PRE) to the post-translocational (POST) state as the newly formed A-site-bound peptidyl-tRNA and P-site-bound deacylated tRNA move to the P and E sites, respectively. Catalyzes the coordinated movement of the two tRNA molecules, the mRNA and conformational changes in the ribosome. The sequence is that of Elongation factor 2 (eft201) from Schizosaccharomyces pombe (strain 972 / ATCC 24843) (Fission yeast).